The sequence spans 161 residues: Phosphopantetheine adenylyltransferase (161 aa).

Thr-10 lines the substrate pocket. Residues 10-11 and His-18 contribute to the ATP site; that span reads TF. Substrate is bound by residues Lys-42, Leu-74, and Arg-88. Residues 89-91, Glu-99, and 124-130 contribute to the ATP site; these read GLR and NAFISSS.

It belongs to the bacterial CoaD family. As to quaternary structure, homohexamer. The cofactor is Mg(2+).

It is found in the cytoplasm. The enzyme catalyses (R)-4'-phosphopantetheine + ATP + H(+) = 3'-dephospho-CoA + diphosphate. The protein operates within cofactor biosynthesis; coenzyme A biosynthesis; CoA from (R)-pantothenate: step 4/5. Reversibly transfers an adenylyl group from ATP to 4'-phosphopantetheine, yielding dephospho-CoA (dPCoA) and pyrophosphate. The chain is Phosphopantetheine adenylyltransferase from Wolinella succinogenes (strain ATCC 29543 / DSM 1740 / CCUG 13145 / JCM 31913 / LMG 7466 / NCTC 11488 / FDC 602W) (Vibrio succinogenes).